Consider the following 209-residue polypeptide: Orotate phosphoribosyltransferase (209 aa).

5-phospho-alpha-D-ribose 1-diphosphate contacts are provided by residues R96, K100, H102, and 122–130; that span reads EDLISTGGS. S126 is a binding site for orotate.

It belongs to the purine/pyrimidine phosphoribosyltransferase family. PyrE subfamily. Homodimer. The cofactor is Mg(2+).

It carries out the reaction orotidine 5'-phosphate + diphosphate = orotate + 5-phospho-alpha-D-ribose 1-diphosphate. It functions in the pathway pyrimidine metabolism; UMP biosynthesis via de novo pathway; UMP from orotate: step 1/2. Its function is as follows. Catalyzes the transfer of a ribosyl phosphate group from 5-phosphoribose 1-diphosphate to orotate, leading to the formation of orotidine monophosphate (OMP). The chain is Orotate phosphoribosyltransferase from Streptococcus sanguinis (strain SK36).